The sequence spans 438 residues: Gamma-glutamyl phosphate reductase (438 aa).

Belongs to the gamma-glutamyl phosphate reductase family.

It is found in the cytoplasm. It carries out the reaction L-glutamate 5-semialdehyde + phosphate + NADP(+) = L-glutamyl 5-phosphate + NADPH + H(+). It functions in the pathway amino-acid biosynthesis; L-proline biosynthesis; L-glutamate 5-semialdehyde from L-glutamate: step 2/2. Functionally, catalyzes the NADPH-dependent reduction of L-glutamate 5-phosphate into L-glutamate 5-semialdehyde and phosphate. The product spontaneously undergoes cyclization to form 1-pyrroline-5-carboxylate. The protein is Gamma-glutamyl phosphate reductase of Natronomonas pharaonis (strain ATCC 35678 / DSM 2160 / CIP 103997 / JCM 8858 / NBRC 14720 / NCIMB 2260 / Gabara) (Halobacterium pharaonis).